Consider the following 421-residue polypeptide: Truncated surface protein (421 aa).

The first 31 residues, 1-31 (MRAKGTRKNYQHLWRWGTMLLGMLMICSAAE), serve as a signal peptide directing secretion. C53 and C73 are joined by a disulfide. 20 N-linked (GlcNAc...) asparagine; by host glycosylation sites follow: N87, N97, N129, N135, N140, N151, N155, N183, N192, N229, N236, N257, N271, N284, N290, N296, N326, N333, N349, and N355. 5 cysteine pairs are disulfide-bonded: C118–C200, C125–C191, C130–C152, C213–C242, and C223–C234. The segment at 130–151 (CTDLTNATYANGSSEERGEIRN) is V1. Positions 152–191 (CSFNVTTIIRNKIQKEYALFYRLDIVPIDKDNTSYTLINC) are V2. The interval 291 to 324 (CTRPNNNTKKGIAIGPGRTLYAREKIIGDIRQAH) is V3. Cysteines 291 and 325 form a disulfide. Positions 357-367 (SSGGDPEIVMH) are CD4-binding loop. C378 and C410 form a disulfide bridge. The V4 stretch occupies residues 378–410 (CKTTQLFNSTWLFNSTWNDTERSDNNETIIIPC). N385, N391, N395, and N403 each carry an N-linked (GlcNAc...) asparagine; by host glycan.

It is found in the virion membrane. The protein is Truncated surface protein (env) of Human immunodeficiency virus type 1 group M subtype B (isolate NY5) (HIV-1).